Reading from the N-terminus, the 106-residue chain is Ribonuclease P protein component 4 (106 aa).

The Zn(2+) site is built by Cys57, Cys60, Cys83, and Cys86.

Belongs to the eukaryotic/archaeal RNase P protein component 4 family. Consists of a catalytic RNA component and at least 4-5 protein subunits. Zn(2+) is required as a cofactor.

The protein resides in the cytoplasm. The enzyme catalyses Endonucleolytic cleavage of RNA, removing 5'-extranucleotides from tRNA precursor.. Part of ribonuclease P, a protein complex that generates mature tRNA molecules by cleaving their 5'-ends. This is Ribonuclease P protein component 4 from Saccharolobus solfataricus (strain ATCC 35092 / DSM 1617 / JCM 11322 / P2) (Sulfolobus solfataricus).